The primary structure comprises 459 residues: MGKEKTHVNVVVIGHVDSGKSTTTGHLIYKCGGIDKRTIEKFEKEAAELGKGSFKYAWVLDKLKAERERVITIDIALWKFETPKYYVTVIDAPGHRDFIKNMITGTSQADCAILIIAGGTGEFEAGISKDGQTREHALLAFTLGVRQLIVAINKMDSVNWSEDRYNEIVKETSNFIKKVGFNPKAVPFVPISGWNGDNMIEATTNASWYKGWHKETKEGKATGKTLLEAIDAVDPPTRPSDKPLRLPLQDVYKIGGIGTVPVGRVETGVIKPGMVVTFAPAGVTTEVKSVEMHHEQLPEGLPGDNVGFNVKNVSVKEIRRGNVAGDSKNDPPKGCDSFTAQVIIFNHPGQISAGYSPVLDCHTAHIACRFDELIEKIDRRSGKKVEDSPKFVKAGDAAIVRMIPSKPMCVETFTEYPPLGRFAVRDMRQTVAVGVIKSVEKSDKGAGKVTKAAQKAAKK.

A N,N,N-trimethylglycine modification is found at Gly2. Lys3 carries the N6,N6-dimethyllysine; alternate modification. Lys3 is modified (N6-methyllysine; alternate). A tr-type G domain is found at 5-240; that stretch reads KTHVNVVVIG…DAVDPPTRPS (236 aa). Residues 14-21 form a G1 region; that stretch reads GHVDSGKS. 14–21 contacts GTP; it reads GHVDSGKS. Lys30 bears the N6-methyllysine mark. A G2 region spans residues 70-74; the sequence is VITID. Lys79 is subject to N6,N6,N6-trimethyllysine. The G3 stretch occupies residues 91–94; it reads DAPG. GTP is bound by residues 91 to 95 and 153 to 156; these read DAPGH and NKMD. A G4 region spans residues 153 to 156; the sequence is NKMD. Positions 192 to 194 are G5; that stretch reads SGW. Lys316 carries the N6,N6-dimethyllysine; alternate modification. An N6-methyllysine; alternate modification is found at Lys316. Lys390 is modified (N6-methyllysine).

The protein belongs to the TRAFAC class translation factor GTPase superfamily. Classic translation factor GTPase family. EF-Tu/EF-1A subfamily.

Its subcellular location is the cytoplasm. This protein promotes the GTP-dependent binding of aminoacyl-tRNA to the A-site of ribosomes during protein biosynthesis. The chain is Elongation factor 1-alpha (TEF) from Blastobotrys adeninivorans (Yeast).